The sequence spans 108 residues: Small ribosomal subunit protein bS18c (108 aa).

Composition is skewed to basic residues over residues 1-19 (MDKS…RRRL) and 97-108 (RARKKKIGLLLN). 2 disordered regions span residues 1 to 23 (MDKS…PPIG) and 83 to 108 (QFER…LLLN).

Belongs to the bacterial ribosomal protein bS18 family. Part of the 30S ribosomal subunit.

The protein resides in the plastid. Its subcellular location is the chloroplast. The chain is Small ribosomal subunit protein bS18c from Illicium oligandrum (Star anise).